Here is a 1009-residue protein sequence, read N- to C-terminus: C2 domain-containing protein aex-1 (1009 aa).

Residues 812-945 (NAPHVDVHIS…ASEEKPTQRL (134 aa)) form the C2 domain.

It belongs to the unc-13 family. As to expression, expressed in intestine, body wall muscles and some amphid neurons.

Involved in retrograde signaling from post-synaptic cells to pre-synaptic neurons, probably by regulating vesicle exocytosis in post-synaptic cells. Acts in muscles, to regulate the localization of synaptic vesicle fusion protein unc-13 likely during vesicle exocytosis and thus regulate retrograde signaling at the neuromuscular junction (NMJ). Regulates anterior body muscle contractions (aBOC) and the expulsion steps during the defecation motor program (DMP). Probably by regulating DMP, plays a homeostatic role in the uptake of triglycerides. Regulates locomotion. The chain is C2 domain-containing protein aex-1 from Caenorhabditis elegans.